Consider the following 122-residue polypeptide: Large ribosomal subunit protein uL14 (122 aa).

It belongs to the universal ribosomal protein uL14 family. In terms of assembly, part of the 50S ribosomal subunit. Forms a cluster with proteins L3 and L19. In the 70S ribosome, L14 and L19 interact and together make contacts with the 16S rRNA in bridges B5 and B8.

Functionally, binds to 23S rRNA. Forms part of two intersubunit bridges in the 70S ribosome. In Shewanella denitrificans (strain OS217 / ATCC BAA-1090 / DSM 15013), this protein is Large ribosomal subunit protein uL14.